We begin with the raw amino-acid sequence, 330 residues long: Polygalacturonase inhibitor 2 (330 aa).

The N-terminal stretch at 1-21 is a signal peptide; it reads MDKTMTLFLLLSTLLLTTSLA. Intrachain disulfides connect Cys25/Cys55 and Cys56/Cys63. LRR repeat units lie at residues 69–93, 94–117, 118–141, 142–166, 167–192, 194–215, 217–237, 238–260, 261–285, and 287–308; these read NHRV…VGDL, PYLT…TIAK, LKNL…FLSQ, LKNL…LSSL, RKLE…TFSG, VPSL…LGNP, FYRI…LFGA, KKTT…KVKL, AKTL…WSKA, and FQLL…EYIQ. N-linked (GlcNAc...) asparagine glycans are attached at residues Asn106, Asn120, and Asn130. Asn291 carries an N-linked (GlcNAc...) asparagine glycan. Disulfide bonds link Cys298/Cys320 and Cys322/Cys329.

The protein belongs to the polygalacturonase-inhibiting protein family.

The protein localises to the secreted. It is found in the cell wall. It localises to the membrane. Inhibitor of fungal polygalacturonase. It is an important factor for plant resistance to phytopathogenic fungi. The chain is Polygalacturonase inhibitor 2 (PGIP2) from Arabidopsis thaliana (Mouse-ear cress).